The primary structure comprises 223 residues: Deoxyribose-phosphate aldolase (223 aa).

The active-site Proton donor/acceptor is the Asp89. Lys152 acts as the Schiff-base intermediate with acetaldehyde in catalysis. Lys181 acts as the Proton donor/acceptor in catalysis.

Belongs to the DeoC/FbaB aldolase family. DeoC type 1 subfamily.

The protein localises to the cytoplasm. It catalyses the reaction 2-deoxy-D-ribose 5-phosphate = D-glyceraldehyde 3-phosphate + acetaldehyde. It participates in carbohydrate degradation; 2-deoxy-D-ribose 1-phosphate degradation; D-glyceraldehyde 3-phosphate and acetaldehyde from 2-deoxy-alpha-D-ribose 1-phosphate: step 2/2. Functionally, catalyzes a reversible aldol reaction between acetaldehyde and D-glyceraldehyde 3-phosphate to generate 2-deoxy-D-ribose 5-phosphate. The polypeptide is Deoxyribose-phosphate aldolase (Bacillus mycoides (strain KBAB4) (Bacillus weihenstephanensis)).